Here is a 369-residue protein sequence, read N- to C-terminus: UDP-N-acetylglucosamine--N-acetylmuramyl-(pentapeptide) pyrophosphoryl-undecaprenol N-acetylglucosamine transferase (369 aa).

UDP-N-acetyl-alpha-D-glucosamine is bound by residues 16–18 (TGG), Asn130, Arg171, Ser196, and Gln297.

The protein belongs to the glycosyltransferase 28 family. MurG subfamily.

Its subcellular location is the cell inner membrane. The catalysed reaction is di-trans,octa-cis-undecaprenyl diphospho-N-acetyl-alpha-D-muramoyl-L-alanyl-D-glutamyl-meso-2,6-diaminopimeloyl-D-alanyl-D-alanine + UDP-N-acetyl-alpha-D-glucosamine = di-trans,octa-cis-undecaprenyl diphospho-[N-acetyl-alpha-D-glucosaminyl-(1-&gt;4)]-N-acetyl-alpha-D-muramoyl-L-alanyl-D-glutamyl-meso-2,6-diaminopimeloyl-D-alanyl-D-alanine + UDP + H(+). It participates in cell wall biogenesis; peptidoglycan biosynthesis. Cell wall formation. Catalyzes the transfer of a GlcNAc subunit on undecaprenyl-pyrophosphoryl-MurNAc-pentapeptide (lipid intermediate I) to form undecaprenyl-pyrophosphoryl-MurNAc-(pentapeptide)GlcNAc (lipid intermediate II). This is UDP-N-acetylglucosamine--N-acetylmuramyl-(pentapeptide) pyrophosphoryl-undecaprenol N-acetylglucosamine transferase from Desulfotalea psychrophila (strain LSv54 / DSM 12343).